A 250-amino-acid chain; its full sequence is Coproheme decarboxylase (250 aa).

Fe-coproporphyrin III-binding positions include Arg-131, 145-149, His-172, and Gln-185; that span reads YPMNK. Tyr-145 is an active-site residue.

This sequence belongs to the ChdC family. Type 1 subfamily. Requires Fe-coproporphyrin III as cofactor.

It carries out the reaction Fe-coproporphyrin III + 2 H2O2 + 2 H(+) = heme b + 2 CO2 + 4 H2O. It catalyses the reaction Fe-coproporphyrin III + H2O2 + H(+) = harderoheme III + CO2 + 2 H2O. The catalysed reaction is harderoheme III + H2O2 + H(+) = heme b + CO2 + 2 H2O. Its pathway is porphyrin-containing compound metabolism; protoheme biosynthesis. Involved in coproporphyrin-dependent heme b biosynthesis. Catalyzes the decarboxylation of Fe-coproporphyrin III (coproheme) to heme b (protoheme IX), the last step of the pathway. The reaction occurs in a stepwise manner with a three-propionate intermediate. This chain is Coproheme decarboxylase, found in Staphylococcus aureus (strain MSSA476).